Reading from the N-terminus, the 84-residue chain is Three-finger toxin 3FTx-1 (84 aa).

The first 21 residues, 1–21, serve as a signal peptide directing secretion; the sequence is MKTLLLTLVVVTIVCLDLGNS. Cystine bridges form between C24–C41, C34–C59, C63–C71, and C72–C77. N-linked (GlcNAc...) asparagine glycosylation is present at N78.

It belongs to the three-finger toxin family. Short-chain subfamily. Expressed by the venom gland.

It is found in the secreted. This Micrurus corallinus (Brazilian coral snake) protein is Three-finger toxin 3FTx-1.